The sequence spans 1318 residues: Serine/threonine-protein kinase ppk18 (1318 aa).

Residues 431–485 (PSVSPEEVHDISQFNHRNDPPITAASVDSSNSFSVHRSSTNHSSTNSGSPNLSRR) form a disordered region. A compositionally biased stretch (low complexity) spans 462–479 (SFSVHRSSTNHSSTNSGS). The Protein kinase domain maps to 566-934 (YEIIKPISKG…INEIKEHPFF (369 aa)). Residues 572 to 580 (ISKGTFGTV) and Lys595 contribute to the ATP site. Catalysis depends on Asp690, which acts as the Proton acceptor. One can recognise an AGC-kinase C-terminal domain in the interval 935–1044 (NGINWDDIFS…KNLSVLERAN (110 aa)). Disordered stretches follow at residues 968 to 1022 (GAAE…FSEA), 1058 to 1078 (KLHISPPDPHIGYTPGSDMPS), and 1091 to 1127 (SLMTNQGSNFSSTDSTPRKSINSSDVESRSKTDGPKS). A compositionally biased stretch (polar residues) spans 972–1000 (SNMSSSVNSGEEVSKDNNVSQERGSQFLR). The segment covering 1091–1115 (SLMTNQGSNFSSTDSTPRKSINSSD) has biased composition (polar residues). The span at 1116–1127 (VESRSKTDGPKS) shows a compositional bias: basic and acidic residues. Residues 1200–1316 (KALICVSKLN…LLRGYIARLC (117 aa)) enclose the Response regulatory domain.

The protein belongs to the protein kinase superfamily. Ser/Thr protein kinase family.

The protein resides in the cytoplasm. The catalysed reaction is L-seryl-[protein] + ATP = O-phospho-L-seryl-[protein] + ADP + H(+). It carries out the reaction L-threonyl-[protein] + ATP = O-phospho-L-threonyl-[protein] + ADP + H(+). The protein is Serine/threonine-protein kinase ppk18 (ppk18) of Schizosaccharomyces pombe (strain 972 / ATCC 24843) (Fission yeast).